The chain runs to 661 residues: Heme transporter BhuA (661 aa).

An N-terminal signal peptide occupies residues 1–23; the sequence is MKFTRTLVLASTSLLATVATSQA. The 112-residue stretch at 48–159 folds into the TBDR plug domain; it reads KDNIEATGGT…AAGAIRYETV (112 aa). The TBDR beta-barrel domain occupies 170–661; the sequence is TFGARIIGSY…TFTFQTAFKF (492 aa).

This sequence belongs to the TonB-dependent receptor family.

It localises to the cell outer membrane. Functionally, heme transporter. The sequence is that of Heme transporter BhuA (bhuA) from Brucella abortus biovar 1 (strain 9-941).